The sequence spans 1122 residues: Histone deacetylase 5 (1122 aa).

A disordered region spans residues methionine 1 to serine 24. A Glycyl lysine isopeptide (Lys-Gly) (interchain with G-Cter in SUMO2) cross-link involves residue lysine 35. Disordered stretches follow at residues alanine 41–arginine 60 and lysine 196–leucine 281. The span at aspartate 247–alanine 258 shows a compositional bias: basic and acidic residues. Serine 259 is modified (phosphoserine; by AMPK, CaMK1, SIK1 and PKD/PRKD1). Over residues lysine 272–leucine 281 the composition is skewed to basic and acidic residues. At threonine 292 the chain carries Phosphothreonine; by PKC. 2 disordered regions span residues glycine 302–threonine 343 and methionine 481–serine 504. Low complexity predominate over residues asparagine 312–serine 327. A compositionally biased stretch (polar residues) spans threonine 328–asparagine 340. Residues serine 494–serine 504 are compositionally biased toward low complexity. Position 498 is a phosphoserine; by AMPK, CaMK1, SIK1 and PKD/PRKD1 (serine 498). Lysine 533 is subject to N6-acetyllysine. Residues threonine 536 to glycine 625 are disordered. Over residues serine 581–glutamate 621 the composition is skewed to acidic residues. Phosphoserine occurs at positions 611 and 661. The tract at residues glycine 684–glutamine 1028 is histone deacetylase. 4 residues coordinate Zn(2+): cysteine 696, cysteine 698, histidine 704, and cysteine 781. Histidine 833 is a catalytic residue. A Nuclear export signal motif is present at residues glutamate 1081 to leucine 1122. Residues glutamate 1097 to leucine 1122 form a disordered region. The segment covering alanine 1104–glutamate 1113 has biased composition (basic and acidic residues). Serine 1108 bears the Phosphoserine mark.

It belongs to the histone deacetylase family. HD type 2 subfamily. In terms of assembly, interacts with AHRR, BAHD1, BCOR, HDAC7, HDAC9, CTBP1, MEF2C, NCOR2, NRIP1, PHB2 and a 14-3-3 chaperone protein. Interacts with BCL6, DDIT3/CHOP, GRK5, KDM5B and MYOCD. Interacts with EP300 in the presence of TFAP2C. Interacts with ANKRA2. Interacts with CUL7 (as part of the 3M complex); negatively regulated by ANKRA2. Interacts with ZBTB7B; the interaction allows the recruitment of HDAC4 on CD8 loci for deacetylation and possible inhibition of CD8 genes expression. Interacts with RARA. Phosphorylated by AMPK, CaMK1, SIK1 and PRKD1 at Ser-259 and Ser-498. The phosphorylation is required for the export to the cytoplasm and inhibition. Phosphorylated by the PKC kinases PKN1 and PKN2, impairing nuclear import. Phosphorylated by GRK5, leading to nuclear export of HDAC5 and allowing MEF2-mediated transcription. In terms of processing, ubiquitinated. Polyubiquitination however does not lead to its degradation. As to expression, ubiquitous.

It localises to the nucleus. The protein resides in the cytoplasm. The enzyme catalyses N(6)-acetyl-L-lysyl-[histone] + H2O = L-lysyl-[histone] + acetate. Functionally, responsible for the deacetylation of lysine residues on the N-terminal part of the core histones (H2A, H2B, H3 and H4). Histone deacetylation gives a tag for epigenetic repression and plays an important role in transcriptional regulation, cell cycle progression and developmental events. Histone deacetylases act via the formation of large multiprotein complexes. Involved in muscle maturation by repressing transcription of myocyte enhancer MEF2C. During muscle differentiation, it shuttles into the cytoplasm, allowing the expression of myocyte enhancer factors. Involved in the MTA1-mediated epigenetic regulation of ESR1 expression in breast cancer. Serves as a corepressor of RARA and causes its deacetylation. In association with RARA, plays a role in the repression of microRNA-10a and thereby in the inflammatory response. This Homo sapiens (Human) protein is Histone deacetylase 5 (HDAC5).